Consider the following 123-residue polypeptide: Cliotide T4 (123 aa).

A signal peptide spans 1 to 28 (MASLRIAPLALFFFLAASVMFTVEKTEA). The cyclopeptide (Gly-Asn) cross-link spans 29–58 (GIPCGESCVFIPCITAAIGCSCKSKVCYRN). 3 cysteine pairs are disulfide-bonded: cysteine 32/cysteine 48, cysteine 36/cysteine 50, and cysteine 41/cysteine 55. Residues 59 to 123 (HVIAAEAKTM…KDHLKMSITN (65 aa)) constitute a propeptide, removed in mature form.

Contains 3 disulfide bonds. Post-translationally, this is a cyclic peptide. As to expression, expressed in flower, stem, shoot, root, leaf, seed, pod and nodule (at protein level).

Probably participates in a plant defense mechanism. Active against Gram-negative bacteria E.coli ATCC 700926 (MIC=1.0 uM), K.pneumoniae ATTC 13883 (MIC=5.5 uM) and P.aeruginosa ATCC 39018 (MIC=7.5 uM). Has hemolytic and cytotoxic activity. The protein is Cliotide T4 of Clitoria ternatea (Butterfly pea).